A 1415-amino-acid polypeptide reads, in one-letter code: DNA-directed RNA polymerase subunit beta' (1415 aa).

Zn(2+) contacts are provided by C72, C74, C87, and C90. Residues D463, D465, and D467 each coordinate Mg(2+). Zn(2+) is bound by residues C811, C885, C892, and C895.

This sequence belongs to the RNA polymerase beta' chain family. The RNAP catalytic core consists of 2 alpha, 1 beta, 1 beta' and 1 omega subunit. When a sigma factor is associated with the core the holoenzyme is formed, which can initiate transcription. The cofactor is Mg(2+). Requires Zn(2+) as cofactor.

The enzyme catalyses RNA(n) + a ribonucleoside 5'-triphosphate = RNA(n+1) + diphosphate. Its function is as follows. DNA-dependent RNA polymerase catalyzes the transcription of DNA into RNA using the four ribonucleoside triphosphates as substrates. This Cereibacter sphaeroides (strain ATCC 17029 / ATH 2.4.9) (Rhodobacter sphaeroides) protein is DNA-directed RNA polymerase subunit beta'.